The sequence spans 254 residues: Small ribosomal subunit protein uS2 (254 aa).

Positions 228 to 254 (DRGAEKEVEAAEEAPAAEAEAAPATEE) are disordered. Residues 240–254 (EAPAAEAEAAPATEE) are compositionally biased toward low complexity.

This sequence belongs to the universal ribosomal protein uS2 family.

The protein is Small ribosomal subunit protein uS2 of Flavobacterium johnsoniae (strain ATCC 17061 / DSM 2064 / JCM 8514 / BCRC 14874 / CCUG 350202 / NBRC 14942 / NCIMB 11054 / UW101) (Cytophaga johnsonae).